The chain runs to 554 residues: Intraflagellar transport protein 56 (554 aa).

The disordered stretch occupies residues 1–23; the sequence is MMLSRAKPAVGNEVQQIDKKKKK. TPR repeat units lie at residues 57-90, 92-125, 151-184, and 468-501; these read EDTELWIGYCSFHLGDYKRSLEVFKALSQQEGCN, DVWVNLACTSFFLGMYKEADEAANKAPKSRLQNR, IEDQLSLASIHYMRSHYQEAIDIYKRILLENRDF, and ANDCYKMGHFYYAAKAFDILERLDPSPEYWEGKR.

It belongs to the IFT56 family. As to quaternary structure, component of the IFT complex B.

The protein localises to the cell projection. It localises to the cilium. Its function is as follows. Component of the intraflagellar transport (IFT) complex B required for transport of proteins in the motile cilium. Required for transport of specific ciliary cargo proteins related to motility, while it is neither required for IFT complex B assembly or motion nor for cilium assembly. Plays a key role in maintaining the integrity of the IFT complex B and the proper ciliary localization of the IFT complex B components. Essential for maintaining proper microtubule organization within the ciliary axoneme. This Xenopus tropicalis (Western clawed frog) protein is Intraflagellar transport protein 56.